The primary structure comprises 222 residues: MRFFIDTANLEDIKKAYKLGVLAGVTTNPSLVAKEGVKFEDRIAEICQAVPKVESVSAEVTPDAVTAEEMIAQAEELIKINGGDKNVTIKLPMTLAGLEACRYLTEKGVKTNVTLIFTVNQALLAARAGATYVSPFLGRLDDISEDGVLLVAKIAELFDVHQLDTQIIAASVRHPDHVTRVAMAGAHIATIPYKVIEQLAMHPLTDQGIEKFAADWAKAPKL.

Lys90 functions as the Schiff-base intermediate with substrate in the catalytic mechanism.

Belongs to the transaldolase family. Type 3B subfamily.

The protein localises to the cytoplasm. It catalyses the reaction D-sedoheptulose 7-phosphate + D-glyceraldehyde 3-phosphate = D-erythrose 4-phosphate + beta-D-fructose 6-phosphate. It functions in the pathway carbohydrate degradation; pentose phosphate pathway; D-glyceraldehyde 3-phosphate and beta-D-fructose 6-phosphate from D-ribose 5-phosphate and D-xylulose 5-phosphate (non-oxidative stage): step 2/3. Functionally, transaldolase is important for the balance of metabolites in the pentose-phosphate pathway. The protein is Probable transaldolase 2 of Bacillus cereus (strain ATCC 14579 / DSM 31 / CCUG 7414 / JCM 2152 / NBRC 15305 / NCIMB 9373 / NCTC 2599 / NRRL B-3711).